Consider the following 398-residue polypeptide: LIM/homeobox protein Lhx3 (398 aa).

LIM zinc-binding domains lie at 28-78 and 87-141; these read CAGC…CKDD and CAAC…CKAD. Positions 154-213 form a DNA-binding region, homeobox; the sequence is AKRPRTTITAKQLETLKNAYNNSPKPARHVREQLSTETGLDMRVVQVWFQNRRAKEKRLK. 2 disordered regions span residues 208–294 and 307–398; these read KEKR…FPLE and DIQA…HAQF. A compositionally biased stretch (low complexity) spans 272 to 282; the sequence is SSLSESSPALS.

It is found in the nucleus. Functionally, transcription factor. The polypeptide is LIM/homeobox protein Lhx3 (lhx3) (Danio rerio (Zebrafish)).